We begin with the raw amino-acid sequence, 448 residues long: Ribosomal protein uS12 methylthiotransferase RimO (448 aa).

One can recognise an MTTase N-terminal domain in the interval 16–126 (PRISFVSLGC…VVAAVHEAVP (111 aa)). 6 residues coordinate [4Fe-4S] cluster: Cys-25, Cys-61, Cys-90, Cys-157, Cys-161, and Cys-164. In terms of domain architecture, Radical SAM core spans 143 to 380 (LTPRHYAYLK…MEAQSHVSLR (238 aa)). The TRAM domain occupies 383-448 (RAKVGKRLSV…DAYDLHGIAV (66 aa)).

The protein belongs to the methylthiotransferase family. RimO subfamily. [4Fe-4S] cluster serves as cofactor.

The protein localises to the cytoplasm. The catalysed reaction is L-aspartate(89)-[ribosomal protein uS12]-hydrogen + (sulfur carrier)-SH + AH2 + 2 S-adenosyl-L-methionine = 3-methylsulfanyl-L-aspartate(89)-[ribosomal protein uS12]-hydrogen + (sulfur carrier)-H + 5'-deoxyadenosine + L-methionine + A + S-adenosyl-L-homocysteine + 2 H(+). In terms of biological role, catalyzes the methylthiolation of an aspartic acid residue of ribosomal protein uS12. This is Ribosomal protein uS12 methylthiotransferase RimO from Methylorubrum extorquens (strain PA1) (Methylobacterium extorquens).